Reading from the N-terminus, the 261-residue chain is MAAISTCQTVIPLPIPVFFNQQFPTLVDICARWQLVFDADAPFELRFESDTLTLHKRDEPKLDGIMVDFVTGAVAHRRKFGGGRGQSIAKAVGLKQGVTPKVVDGTAGLGRDAFVLASLGCTVTMVERHPVVAALLEDGLRRAYQDAEIGDWMRERMQLFHGSSLEALAKLEQEVDVVYLDPMYPHRDKSALVKKEMRVFQTLVGADLDADGLLAPAMALASKRVVVKRPDYAEDLAGVKPSMVIETKKNRFDVYVKSAMK.

Residues 111-112, 127-128, 163-164, and Asp-181 contribute to the S-adenosyl-L-methionine site; these read RD, ER, and SS.

This sequence belongs to the methyltransferase superfamily. RsmJ family.

Its subcellular location is the cytoplasm. The catalysed reaction is guanosine(1516) in 16S rRNA + S-adenosyl-L-methionine = N(2)-methylguanosine(1516) in 16S rRNA + S-adenosyl-L-homocysteine + H(+). Its function is as follows. Specifically methylates the guanosine in position 1516 of 16S rRNA. The polypeptide is Ribosomal RNA small subunit methyltransferase J (Shewanella sp. (strain MR-4)).